Here is a 224-residue protein sequence, read N- to C-terminus: Beta-casein (224 aa).

The first 15 residues, 1–15 (MKVLILACLVALALA), serve as a signal peptide directing secretion. Phosphoserine is present on residues serine 30, serine 32, serine 33, and serine 34.

The protein belongs to the beta-casein family. As to expression, mammary gland specific. Secreted in milk.

Its subcellular location is the secreted. In terms of biological role, important role in determination of the surface properties of the casein micelles. The protein is Beta-casein (CSN2) of Bubalus bubalis (Domestic water buffalo).